Reading from the N-terminus, the 92-residue chain is UPF0250 protein Avin_08440 (92 aa).

It belongs to the UPF0250 family.

The polypeptide is UPF0250 protein Avin_08440 (Azotobacter vinelandii (strain DJ / ATCC BAA-1303)).